A 125-amino-acid chain; its full sequence is Protein ApaG (125 aa).

An ApaG domain is found at 3 to 125; that stretch reads TAVTEGIEVT…FPLVVPGSLN (123 aa).

In Anaeromyxobacter dehalogenans (strain 2CP-C), this protein is Protein ApaG.